The primary structure comprises 113 residues: Iron-sulfur cluster insertion protein ErpA (113 aa).

3 residues coordinate iron-sulfur cluster: Cys-41, Cys-105, and Cys-107.

It belongs to the HesB/IscA family. Homodimer. Iron-sulfur cluster is required as a cofactor.

Required for insertion of 4Fe-4S clusters for at least IspG. This chain is Iron-sulfur cluster insertion protein ErpA, found in Aliivibrio fischeri (strain ATCC 700601 / ES114) (Vibrio fischeri).